Here is a 174-residue protein sequence, read N- to C-terminus: Small ribosomal subunit protein uS5 (174 aa).

The region spanning 20-83 (IEDQLVAINR…EAGKKRMIKV (64 aa)) is the S5 DRBM domain.

The protein belongs to the universal ribosomal protein uS5 family. Part of the 30S ribosomal subunit. Contacts proteins S4 and S8.

In terms of biological role, with S4 and S12 plays an important role in translational accuracy. Located at the back of the 30S subunit body where it stabilizes the conformation of the head with respect to the body. This Lactobacillus gasseri (strain ATCC 33323 / DSM 20243 / BCRC 14619 / CIP 102991 / JCM 1131 / KCTC 3163 / NCIMB 11718 / NCTC 13722 / AM63) protein is Small ribosomal subunit protein uS5.